We begin with the raw amino-acid sequence, 432 residues long: Adhesin YadA (432 aa).

Positions 1-25 are cleaved as a signal peptide; that stretch reads MTKDFKISVSAALISALFSSPYAFA. The tract at residues 26–340 is surface exposed passenger domain; the sequence is EEPEDGNDGI…KKAISESNQY (315 aa). The stretch at 242–263 forms a coiled coil; that stretch reads VNVAQLKKEMAETLENARKETL. Residues 341 to 379 form an outer membrane translocation of the passenger domain region; sequence TDHKFSQLDNRLDKLDKRVDKGLASSAALNSLFQPYGVG. A run of 4 beta stranded transmembrane segments spans residues 379–389, 393–404, 411–417, and 421–432; these read GKVNFTAGVGG, SQALAIGSGYRV, KAGVAYA, and NVMYNASFNIEW. Positions 380 to 432 are translocator domain; sequence KVNFTAGVGGYRSSQALAIGSGYRVNESVALKAGVAYAGSSNVMYNASFNIEW.

This sequence belongs to the autotransporter-2 (AT-2) (TC 1.B.40) family. As to quaternary structure, homotrimer.

The protein resides in the cell surface. It localises to the cell outer membrane. Collagen-binding outer membrane protein forming a fibrillar matrix on the bacterial cell surface. Promotes attachment to eukaryotic cells and after invasion, is the major adhesin in infected tissue. Constitutes an alternative uptake pathway under conditions in which invasin synthesis is repressed. The protein is Adhesin YadA (yadA) of Yersinia pseudotuberculosis serotype I (strain IP32953).